Consider the following 262-residue polypeptide: Cerebellar degeneration-related antigen 1 (262 aa).

Tandem repeats lie at residues 3 to 8, 9 to 14, 15 to 20, 21 to 26, 27 to 32, 33 to 38, 39 to 44, 45 to 50, 51 to 56, 57 to 62, 63 to 68, 69 to 74, 75 to 80, 81 to 86, 87 to 92, 93 to 98, 99 to 104, 105 to 110, 111 to 116, 117 to 122, 123 to 128, 129 to 134, 135 to 140, 141 to 146, 147 to 152, 153 to 158, 159 to 164, 165 to 170, 171 to 176, 177 to 182, 183 to 188, 189 to 194, 195 to 200, and 201 to 206. Positions 3 to 140 are 23 X 6 AA approximate repeats; the sequence is WLEDVDFLED…EDLEAIGRCG (138 aa). The tract at residues 141 to 176 is 6 X 6 AA approximate repeats; that stretch reads FSGRHGFFGRRRFSGRPKLSGRLGLLGRRGFSGRLG. The tract at residues 177–206 is 5 X 6 AA approximate repeats; that stretch reads GYWKTWIFWKTWIFWKTWIFRKTYIGWKTW.

As to expression, brain; predominantly expressed in normal neuroectodermal tissues and in certain malignant tumors.

This is Cerebellar degeneration-related antigen 1 (CDR1) from Homo sapiens (Human).